A 57-amino-acid chain; its full sequence is Large ribosomal subunit protein bL32 (57 aa).

Basic residues predominate over residues 1-22 (MAVPKKKTSKAKRDQRRAHWRR). Residues 1 to 35 (MAVPKKKTSKAKRDQRRAHWRRQASSQAQKALSLG) form a disordered region.

Belongs to the bacterial ribosomal protein bL32 family.

The chain is Large ribosomal subunit protein bL32 (rpmF) from Synechocystis sp. (strain ATCC 27184 / PCC 6803 / Kazusa).